We begin with the raw amino-acid sequence, 152 residues long: Large ribosomal subunit protein eL29 (152 aa).

The segment covering 1-26 (MAKSKNHTTHNQSRKWHRNGIKKPRS) has biased composition (basic residues). Positions 1–32 (MAKSKNHTTHNQSRKWHRNGIKKPRSQRYESL) are disordered. Lysine 5 is subject to N6-methyllysine. Serine 31 is subject to Phosphoserine. Lysine 33 bears the N6-acetyllysine mark. The disordered stretch occupies residues 119–152 (CRPKSQAKASTKAKPPAAAAPAAKGAQAPTKAPE). Residues 121 to 152 (PKSQAKASTKAKPPAAAAPAAKGAQAPTKAPE) are compositionally biased toward low complexity.

Belongs to the eukaryotic ribosomal protein eL29 family. As to quaternary structure, component of the large ribosomal subunit.

Its subcellular location is the cytoplasm. In terms of biological role, component of the large ribosomal subunit. The ribosome is a large ribonucleoprotein complex responsible for the synthesis of proteins in the cell. The sequence is that of Large ribosomal subunit protein eL29 (RPL29) from Bos taurus (Bovine).